Reading from the N-terminus, the 335-residue chain is Tetraacyldisaccharide 4'-kinase (335 aa).

Residue 59-66 coordinates ATP; it reads TAGGNGKT.

Belongs to the LpxK family.

The enzyme catalyses a lipid A disaccharide + ATP = a lipid IVA + ADP + H(+). It participates in glycolipid biosynthesis; lipid IV(A) biosynthesis; lipid IV(A) from (3R)-3-hydroxytetradecanoyl-[acyl-carrier-protein] and UDP-N-acetyl-alpha-D-glucosamine: step 6/6. Transfers the gamma-phosphate of ATP to the 4'-position of a tetraacyldisaccharide 1-phosphate intermediate (termed DS-1-P) to form tetraacyldisaccharide 1,4'-bis-phosphate (lipid IVA). The sequence is that of Tetraacyldisaccharide 4'-kinase from Vibrio vulnificus (strain YJ016).